The sequence spans 142 residues: Large ribosomal subunit protein uL13 (142 aa).

This sequence belongs to the universal ribosomal protein uL13 family. As to quaternary structure, part of the 50S ribosomal subunit.

Functionally, this protein is one of the early assembly proteins of the 50S ribosomal subunit, although it is not seen to bind rRNA by itself. It is important during the early stages of 50S assembly. The polypeptide is Large ribosomal subunit protein uL13 (Pseudomonas syringae pv. tomato (strain ATCC BAA-871 / DC3000)).